A 782-amino-acid chain; its full sequence is Endonuclease MutS2 (782 aa).

ATP is bound at residue Gly336–Thr343. The Smr domain occupies Leu707–Lys782.

The protein belongs to the DNA mismatch repair MutS family. MutS2 subfamily. Homodimer. Binds to stalled ribosomes, contacting rRNA.

Endonuclease that is involved in the suppression of homologous recombination and thus may have a key role in the control of bacterial genetic diversity. Its function is as follows. Acts as a ribosome collision sensor, splitting the ribosome into its 2 subunits. Detects stalled/collided 70S ribosomes which it binds and splits by an ATP-hydrolysis driven conformational change. Acts upstream of the ribosome quality control system (RQC), a ribosome-associated complex that mediates the extraction of incompletely synthesized nascent chains from stalled ribosomes and their subsequent degradation. Probably generates substrates for RQC. In Staphylococcus aureus (strain Mu50 / ATCC 700699), this protein is Endonuclease MutS2.